The sequence spans 171 residues: Adenine phosphoribosyltransferase (171 aa).

Belongs to the purine/pyrimidine phosphoribosyltransferase family. As to quaternary structure, homodimer.

The protein resides in the cytoplasm. It catalyses the reaction AMP + diphosphate = 5-phospho-alpha-D-ribose 1-diphosphate + adenine. It functions in the pathway purine metabolism; AMP biosynthesis via salvage pathway; AMP from adenine: step 1/1. Its function is as follows. Catalyzes a salvage reaction resulting in the formation of AMP, that is energically less costly than de novo synthesis. The chain is Adenine phosphoribosyltransferase from Acetivibrio thermocellus (strain ATCC 27405 / DSM 1237 / JCM 9322 / NBRC 103400 / NCIMB 10682 / NRRL B-4536 / VPI 7372) (Clostridium thermocellum).